Reading from the N-terminus, the 474-residue chain is Aspartic-type endopeptidase ctsD (474 aa).

An N-terminal signal peptide occupies residues 1–19 (MHLLQCLLSTISLASTVTA). Residues 106-413 (YFATVRVGSQ…DYDNHRIGFA (308 aa)) form the Peptidase A1 domain. Aspartate 124 is an active-site residue. 4 N-linked (GlcNAc...) asparagine glycosylation sites follow: asparagine 189, asparagine 197, asparagine 275, and asparagine 301. The active site involves aspartate 307. N-linked (GlcNAc...) asparagine glycosylation is found at asparagine 338, asparagine 344, and asparagine 414. Serine 452 carries GPI-anchor amidated serine lipidation. Positions 453–474 (ASIVSRFVHWPFIFALLCMVLV) are cleaved as a propeptide — removed in mature form.

Belongs to the peptidase A1 family.

Its subcellular location is the cell membrane. Functionally, secreted aspartic-type endopeptidase which is secreted and contributes to virulence. The protein is Aspartic-type endopeptidase ctsD (ctsD) of Aspergillus fumigatus (strain ATCC MYA-4609 / CBS 101355 / FGSC A1100 / Af293) (Neosartorya fumigata).